Reading from the N-terminus, the 332-residue chain is Protoheme IX farnesyltransferase (332 aa).

The next 7 helical transmembrane spans lie at 63–83 (LICT…LNCL), 109–129 (TVFL…ISGV), 132–152 (LAAG…TIIL), 160–180 (IVFG…AATG), 188–208 (WLFS…AILL), 245–265 (ILGV…LLPF), and 286–306 (AKGL…LLLI).

Belongs to the UbiA prenyltransferase family. Protoheme IX farnesyltransferase subfamily.

The protein localises to the cell inner membrane. The enzyme catalyses heme b + (2E,6E)-farnesyl diphosphate + H2O = Fe(II)-heme o + diphosphate. Its pathway is porphyrin-containing compound metabolism; heme O biosynthesis; heme O from protoheme: step 1/1. In terms of biological role, converts heme B (protoheme IX) to heme O by substitution of the vinyl group on carbon 2 of heme B porphyrin ring with a hydroxyethyl farnesyl side group. The chain is Protoheme IX farnesyltransferase from Prochlorococcus marinus subsp. pastoris (strain CCMP1986 / NIES-2087 / MED4).